The primary structure comprises 204 residues: NAD(P)H-quinone oxidoreductase subunit M, chloroplastic (204 aa).

Residues 1–27 (MASTSMSLTRACKVHAVLACSIPSVSS) constitute a chloroplast transit peptide.

Belongs to the NDH complex subunit M family. As to quaternary structure, part of the chloroplast NDH complex, composed of a mixture of chloroplast and nucleus encoded subunits. Component of the NDH subcomplex A, at least composed of ndhH, ndhI, ndhJ, ndhK, ndhL, ndhM, ndhN and ndhO.

Its subcellular location is the plastid. It is found in the chloroplast thylakoid membrane. It catalyses the reaction a plastoquinone + NADH + (n+1) H(+)(in) = a plastoquinol + NAD(+) + n H(+)(out). The enzyme catalyses a plastoquinone + NADPH + (n+1) H(+)(in) = a plastoquinol + NADP(+) + n H(+)(out). Its function is as follows. NDH shuttles electrons from NAD(P)H:plastoquinone, via FMN and iron-sulfur (Fe-S) centers, to quinones in the photosynthetic chain and possibly in a chloroplast respiratory chain. The immediate electron acceptor for the enzyme in this species is believed to be plastoquinone. Couples the redox reaction to proton translocation, and thus conserves the redox energy in a proton gradient. The polypeptide is NAD(P)H-quinone oxidoreductase subunit M, chloroplastic (Physcomitrium patens (Spreading-leaved earth moss)).